Consider the following 190-residue polypeptide: MFQGADSQAGKSGSRSMKPPGGESSDLFGSPEEGISSSKPNRMASNIFGPTEEPKNIPKRTNPPGGKGSGIFDESTPVQTRQRLNPPGGKTSDIFGSPVTATAPLAHPNKPKDHVLLCEGEDSKSDLKAATDSTPRGEQSDKGSSKEVEHAKIPEPTPTVDSHEPRLGPRPRSHNKVLNPPGGKSSLSFY.

Met1 carries the N-acetylmethionine modification. Over residues 1-15 the composition is skewed to polar residues; sequence MFQGADSQAGKSGSR. The disordered stretch occupies residues 1–190; that stretch reads MFQGADSQAG…PGGKSSLSFY (190 aa). Lys11 carries the N6-acetyllysine modification. Ser30 carries the post-translational modification Phosphoserine. Over residues 35 to 44 the composition is skewed to polar residues; that stretch reads ISSSKPNRMA. 3 positions are modified to phosphoserine: Ser45, Ser69, and Ser97. Basic and acidic residues-rich tracts occupy residues 110–129 and 138–153; these read KPKDHVLLCEGEDSKSDLKA and EQSDKGSSKEVEHAKI. Phosphoserine is present on Ser144.

It belongs to the JUPITER family. Monomer. Dimer. Interacts with TPCN1.

It is found in the cytoplasm. The protein localises to the nucleus. Its function is as follows. Nicotinic acid adenine dinucleotide phosphate (NAADP) binding protein required for NAADP-evoked intracellular calcium release. Confers NAADP-sensitivity to the two pore channels (TPCs) complex. Enables NAADP to activate Ca(2+) release from the endoplasmic reticulum through ryanodine receptors. The chain is Jupiter microtubule associated homolog 2 from Mus musculus (Mouse).